Reading from the N-terminus, the 201-residue chain is Ubiquinone biosynthesis accessory factor UbiJ (201 aa).

The SCP2 domain occupies 15–112 (LNTFLYRSPA…QVVQNFVALA (98 aa)).

This sequence belongs to the UbiJ family. In terms of assembly, component of the Ubi complex metabolon, which regroups five ubiquinone biosynthesis proteins (UbiE, UbiF, UbiG, UbiH and UbiI) and two accessory factors (UbiK and the lipid-binding protein UbiJ). Interacts with UbiK and forms a complex composed of 2 UbiK subunits and 1 UbiJ subunit. The UbiK-UbiJ complex interacts with palmitoleic acid.

It localises to the cytoplasm. Its pathway is cofactor biosynthesis; ubiquinone biosynthesis. Functionally, required for ubiquinone (coenzyme Q) biosynthesis under aerobic conditions. Binds hydrophobic ubiquinone biosynthetic intermediates via its SCP2 domain and is essential for the stability of the Ubi complex. May constitute a docking platform where Ubi enzymes assemble and access their SCP2-bound polyprenyl substrates. The sequence is that of Ubiquinone biosynthesis accessory factor UbiJ from Escherichia coli (strain K12).